An 830-amino-acid polypeptide reads, in one-letter code: Leucine--tRNA ligase (830 aa).

The 'HIGH' region motif lies at 48–58 (PYPSGAIHMGH). The 'KMSKS' region motif lies at 596–600 (KMSKS). K599 is a binding site for ATP.

This sequence belongs to the class-I aminoacyl-tRNA synthetase family.

The protein localises to the cytoplasm. It carries out the reaction tRNA(Leu) + L-leucine + ATP = L-leucyl-tRNA(Leu) + AMP + diphosphate. In Helicobacter hepaticus (strain ATCC 51449 / 3B1), this protein is Leucine--tRNA ligase.